Reading from the N-terminus, the 353-residue chain is UPF0283 membrane protein YcjF (353 aa).

The segment at 16–35 is disordered; the sequence is KEESTSAFKAQQTFSEAESR. Over residues 20-31 the composition is skewed to polar residues; the sequence is TSAFKAQQTFSE. Transmembrane regions (helical) follow at residues 70–90, 100–120, and 213–233; these read MVMGGLALFGASVVGQGVQWT, VALGGCAAGALIIGAGVGSVV, and ESTLMIAVSPLALVDMAFIAW.

The protein belongs to the UPF0283 family.

It is found in the cell inner membrane. The protein is UPF0283 membrane protein YcjF of Salmonella heidelberg (strain SL476).